Here is a 426-residue protein sequence, read N- to C-terminus: Glutamyl-tRNA reductase (426 aa).

Residues 49–52, serine 107, 112–114, and glutamine 118 each bind substrate; these read TCNR and EPQ. Catalysis depends on cysteine 50, which acts as the Nucleophile. 187-192 contributes to the NADP(+) binding site; sequence GAGETI.

Belongs to the glutamyl-tRNA reductase family. As to quaternary structure, homodimer.

The catalysed reaction is (S)-4-amino-5-oxopentanoate + tRNA(Glu) + NADP(+) = L-glutamyl-tRNA(Glu) + NADPH + H(+). The protein operates within porphyrin-containing compound metabolism; protoporphyrin-IX biosynthesis; 5-aminolevulinate from L-glutamyl-tRNA(Glu): step 1/2. Its function is as follows. Catalyzes the NADPH-dependent reduction of glutamyl-tRNA(Glu) to glutamate 1-semialdehyde (GSA). This is Glutamyl-tRNA reductase from Ectopseudomonas mendocina (strain ymp) (Pseudomonas mendocina).